Consider the following 341-residue polypeptide: S-adenosylmethionine:tRNA ribosyltransferase-isomerase (341 aa).

This sequence belongs to the QueA family. In terms of assembly, monomer.

It is found in the cytoplasm. The enzyme catalyses 7-aminomethyl-7-carbaguanosine(34) in tRNA + S-adenosyl-L-methionine = epoxyqueuosine(34) in tRNA + adenine + L-methionine + 2 H(+). Its pathway is tRNA modification; tRNA-queuosine biosynthesis. Transfers and isomerizes the ribose moiety from AdoMet to the 7-aminomethyl group of 7-deazaguanine (preQ1-tRNA) to give epoxyqueuosine (oQ-tRNA). This is S-adenosylmethionine:tRNA ribosyltransferase-isomerase from Chlorobium phaeovibrioides (strain DSM 265 / 1930) (Prosthecochloris vibrioformis (strain DSM 265)).